The following is a 314-amino-acid chain: MIEIEKPKIETVEISDDAKFGKFVVEPLERGYGTTLGNSLRRILLSSLPGAAVTSIQIDGVLHEFSTIEGVVEDVTTIILHIKKLALKIYSDEEKTLEIDVQGEGTVTAADITHDSDVEILNPDLHIATLGENASFRVRLTAQRGRGYTPADANKRDDQPIGVIPIDSIYTPVSRVSYQVENTRVGQVANYDKLTLDVWTDGSTGPKEAIALGSKILTEHLNIFVGLTDEAQHAEIMVEKEEDQKEKVLEMTIEELDLSVRSYNCLKRAGINTVQELANKTEEDMMKVRNLGRKSLEEVKAKLEELGLGLRKDD.

Residues 1–228 (MIEIEKPKIE…EHLNIFVGLT (228 aa)) are alpha N-terminal domain (alpha-NTD). The segment at 245–314 (KEKVLEMTIE…ELGLGLRKDD (70 aa)) is alpha C-terminal domain (alpha-CTD).

The protein belongs to the RNA polymerase alpha chain family. As to quaternary structure, homodimer. RNAP is composed of a core of 2 alpha, a beta and a beta' subunit. The core is associated with a delta subunit, and at least one of epsilon or omega. When a sigma factor is associated with the core the holoenzyme is formed, which can initiate transcription.

It carries out the reaction RNA(n) + a ribonucleoside 5'-triphosphate = RNA(n+1) + diphosphate. Its function is as follows. DNA-dependent RNA polymerase catalyzes the transcription of DNA into RNA using the four ribonucleoside triphosphates as substrates. In Bacillus subtilis (strain 168), this protein is DNA-directed RNA polymerase subunit alpha.